Reading from the N-terminus, the 309-residue chain is DSC E3 ubiquitin ligase complex subunit C (309 aa).

Asparagine 61 is a glycosylation site (N-linked (GlcNAc...) asparagine). Disordered stretches follow at residues 88-110 (LPPS…GKGK) and 148-177 (EQAD…FDRL). Helical transmembrane passes span 257-277 (DDML…AMWL) and 289-309 (GLAV…RIMN).

The protein belongs to the dsc3 family. As to quaternary structure, component of the DSC E3 ubiquitin ligase complex composed of dscA, dscB, dscC and dscD.

Its subcellular location is the endoplasmic reticulum membrane. Its pathway is protein modification; protein ubiquitination. In terms of biological role, component of the DSC E3 ubiquitin ligase complex which is required for the srbA transcriptional activator proteolytic cleavage to release the soluble transcription factor from the membrane in low oxygen or sterol conditions. Required for growth during hypoxia and triazole drug susceptibility, as well as for virulence in a murine model of invasive pulmonary aspergillosis (IPA). This is DSC E3 ubiquitin ligase complex subunit C from Aspergillus fumigatus (strain ATCC MYA-4609 / CBS 101355 / FGSC A1100 / Af293) (Neosartorya fumigata).